A 210-amino-acid polypeptide reads, in one-letter code: Thymidylate kinase (210 aa).

9-16 contacts ATP; sequence GLEGAGKS.

The protein belongs to the thymidylate kinase family.

The catalysed reaction is dTMP + ATP = dTDP + ADP. Functionally, phosphorylation of dTMP to form dTDP in both de novo and salvage pathways of dTTP synthesis. This Aliivibrio fischeri (strain ATCC 700601 / ES114) (Vibrio fischeri) protein is Thymidylate kinase.